The sequence spans 122 residues: Large ribosomal subunit protein uL14 (122 aa).

The protein belongs to the universal ribosomal protein uL14 family. Part of the 50S ribosomal subunit. Forms a cluster with proteins L3 and L19. In the 70S ribosome, L14 and L19 interact and together make contacts with the 16S rRNA in bridges B5 and B8.

Binds to 23S rRNA. Forms part of two intersubunit bridges in the 70S ribosome. The polypeptide is Large ribosomal subunit protein uL14 (Pseudoalteromonas translucida (strain TAC 125)).